A 315-amino-acid chain; its full sequence is Tyrosine recombinase XerC (315 aa).

Residues 1 to 103 enclose the Core-binding (CB) domain; the sequence is MIASFYAFLD…AIKSFAKFCV (103 aa). A Tyr recombinase domain is found at 124 to 306; sequence ELPSPLTYEQ…SMKLKKQIHD (183 aa). Active-site residues include R164, K188, H258, R261, and H284. Y293 serves as the catalytic O-(3'-phospho-DNA)-tyrosine intermediate.

This sequence belongs to the 'phage' integrase family. XerC subfamily. As to quaternary structure, forms a cyclic heterotetrameric complex composed of two molecules of XerC and two molecules of XerD.

It localises to the cytoplasm. In terms of biological role, site-specific tyrosine recombinase, which acts by catalyzing the cutting and rejoining of the recombining DNA molecules. The XerC-XerD complex is essential to convert dimers of the bacterial chromosome into monomers to permit their segregation at cell division. It also contributes to the segregational stability of plasmids. The chain is Tyrosine recombinase XerC from Chlamydia muridarum (strain MoPn / Nigg).